We begin with the raw amino-acid sequence, 971 residues long: Mating-type switching protein swi1 (971 aa).

Serine 528, serine 536, and serine 970 each carry phosphoserine.

As to quaternary structure, fork protection complex (FPC) consisting of swi1 and swi3 interacts with mat1 cis-acting sequences and mat1-proximal polar-terminator of replication (RTS1).

Its subcellular location is the nucleus. Functionally, forms a fork protection complex (FPC) with swi3. FPC coordinates leading and lagging strand synthesis and moves with the replication fork. It is required for programmed fork-pausing which is necessary for mating-type switching. FPC stabilizes replication forks in a configuration that is recognized by replication checkpoint sensors. It is involved in termination at the mat1-proximal polar-terminator of replication (RTS1) and also required for activation of the Rad53-like checkpoint kinase cds1. The sequence is that of Mating-type switching protein swi1 (swi1) from Schizosaccharomyces pombe (strain 972 / ATCC 24843) (Fission yeast).